A 125-amino-acid chain; its full sequence is Large ribosomal subunit protein bL12 (125 aa).

Belongs to the bacterial ribosomal protein bL12 family. As to quaternary structure, homodimer. Part of the ribosomal stalk of the 50S ribosomal subunit. Forms a multimeric L10(L12)X complex, where L10 forms an elongated spine to which 2 to 4 L12 dimers bind in a sequential fashion. Binds GTP-bound translation factors.

Functionally, forms part of the ribosomal stalk which helps the ribosome interact with GTP-bound translation factors. Is thus essential for accurate translation. The protein is Large ribosomal subunit protein bL12 of Coprothermobacter proteolyticus (strain ATCC 35245 / DSM 5265 / OCM 4 / BT).